The sequence spans 71 residues: Brevinin-1HN1 (71 aa).

The first 22 residues, 1-22 (MFTSKKPLLLLFFLGTINLSLC), serve as a signal peptide directing secretion. Positions 23–45 (EQERDADEEERRDDPDERDVEVE) are excised as a propeptide. Residues Cys-65 and Cys-71 are joined by a disulfide bond.

In terms of tissue distribution, expressed by the skin glands.

It is found in the secreted. Functionally, has antimicrobial activity against Gram-positive bacteria and fungi but has weak or no activity against a range of Gram-negative bacteria except P.faecalis. Active against the Gram-positive bacteria E.faecium 091299 (MIC=19 uM), E.faecalis 981 (MIC=19 uM), S.aureus ATCC 25923 (MIC=1.2 uM), S.carnosus KHS (MIC=4.8 uM), B.licheniformis X39 (MIC=2.4 uM) and R.rhodochrous X15 (MIC=1.2 uM). Active against the Gram-negative bacterium P.faecalis X29 (MIC=4.8 uM), is virtually inactive against E.coli ATCC 25922 (MIC=150 uM) and inactive against P.aeruginosa and S.typhi. Has antifungal activity against C.albicans ATCC 2002 (MIC=2.4 uM) and is also active against the slime mold 090223 (MIC=1.2 uM). Has low hemolytic activity against human erythrocytes (LC(50)=75 uM). The polypeptide is Brevinin-1HN1 (Odorrana hainanensis (Odor frog)).